A 488-amino-acid chain; its full sequence is Ribulose bisphosphate carboxylase large chain (488 aa).

Positions 127 and 177 each coordinate substrate. Lysine 179 serves as the catalytic Proton acceptor. Lysine 181 provides a ligand contact to substrate. Positions 205, 207, and 208 each coordinate Mg(2+). N6-carboxylysine is present on lysine 205. The active-site Proton acceptor is histidine 297. Substrate is bound by residues arginine 298, histidine 330, and serine 382.

It belongs to the RuBisCO large chain family. Type I subfamily. In terms of assembly, heterohexadecamer of 8 large chains and 8 small chains. Mg(2+) serves as cofactor.

It is found in the plastid. It localises to the chloroplast. It catalyses the reaction 2 (2R)-3-phosphoglycerate + 2 H(+) = D-ribulose 1,5-bisphosphate + CO2 + H2O. The catalysed reaction is D-ribulose 1,5-bisphosphate + O2 = 2-phosphoglycolate + (2R)-3-phosphoglycerate + 2 H(+). Its function is as follows. RuBisCO catalyzes two reactions: the carboxylation of D-ribulose 1,5-bisphosphate, the primary event in carbon dioxide fixation, as well as the oxidative fragmentation of the pentose substrate in the photorespiration process. Both reactions occur simultaneously and in competition at the same active site. In Pyropia dentata (Red alga), this protein is Ribulose bisphosphate carboxylase large chain (rbcL).